A 129-amino-acid chain; its full sequence is Cocaine- and amphetamine-regulated transcript protein (129 aa).

An N-terminal signal peptide occupies residues 1–27; it reads MESSRLRLLPLLGAALLLLLPLLGARA. Y41 carries the post-translational modification Phosphotyrosine. S48 carries the post-translational modification Phosphoserine. 3 cysteine pairs are disulfide-bonded: C95/C113, C101/C121, and C115/C128.

Belongs to the CART family.

Its subcellular location is the secreted. Satiety factor closely associated with the actions of leptin and neuropeptide y; this anorectic peptide inhibits both normal and starvation-induced feeding and completely blocks the feeding response induced by neuropeptide Y and regulated by leptin in the hypothalamus. This is Cocaine- and amphetamine-regulated transcript protein (Cartpt) from Mus musculus (Mouse).